Reading from the N-terminus, the 141-residue chain is Transmembrane protein 216 (141 aa).

4 helical membrane passes run 15-35 (ILFF…LFIF), 49-69 (LVLD…RLFF), 82-102 (LGIS…YLLL), and 115-135 (SILL…LTAF).

In terms of assembly, part of the tectonic-like complex (also named B9 complex). Interacts with TMEM107.

It is found in the membrane. It localises to the cytoplasm. Its subcellular location is the cytoskeleton. The protein localises to the cilium basal body. Part of the tectonic-like complex which is required for tissue-specific ciliogenesis and may regulate ciliary membrane composition. This Bos taurus (Bovine) protein is Transmembrane protein 216 (TMEM216).